The sequence spans 301 residues: 3-dehydroquinate dehydratase (301 aa).

The 3-dehydroquinate dehydratase stretch occupies residues 1–221; it reads MLQYGVLICG…YYAALLALGI (221 aa). 3-dehydroquinate contacts are provided by residues 32–34 and Arg-63; that span reads ELR. The active-site Proton donor/acceptor is His-119. Catalysis depends on Lys-145, which acts as the Schiff-base intermediate with substrate. Positions 183, 202, and 206 each coordinate 3-dehydroquinate. The Chorismate mutase domain maps to 222-301; sequence TPSGGGLPAL…QMCKAVQLVA (80 aa).

This sequence belongs to the type-I 3-dehydroquinase family. Homodimer.

The enzyme catalyses 3-dehydroquinate = 3-dehydroshikimate + H2O. It functions in the pathway metabolic intermediate biosynthesis; chorismate biosynthesis; chorismate from D-erythrose 4-phosphate and phosphoenolpyruvate: step 3/7. Involved in the third step of the chorismate pathway, which leads to the biosynthesis of aromatic amino acids. Catalyzes the cis-dehydration of 3-dehydroquinate (DHQ) and introduces the first double bond of the aromatic ring to yield 3-dehydroshikimate. This chain is 3-dehydroquinate dehydratase, found in Pyrobaculum aerophilum (strain ATCC 51768 / DSM 7523 / JCM 9630 / CIP 104966 / NBRC 100827 / IM2).